Reading from the N-terminus, the 713-residue chain is Serologically defined colon cancer antigen 8 (713 aa).

2 positions are modified to phosphoserine: serine 4 and serine 28. The tract at residues 84 to 103 (QADKESEVSPSRRRKMSPLR) is disordered. The stretch at 129-175 (IHHLEAEVKFCKEELSGMKNKIQVVVLENEGLQQQLKSQRQEETLRE) forms a coiled coil. The interval 194 to 215 (EDSGVGETSKRPFSHDNADFGK) is disordered. Positions 201-212 (TSKRPFSHDNAD) are enriched in basic and acidic residues. The tract at residues 216-713 (AASAGEQLEL…QLPSMPQSDC (498 aa)) is sufficient for homodimerization. 2 coiled-coil regions span residues 223-273 (LELE…LLAA) and 348-707 (EEAN…QLPS). The mediates interaction with OFD1 stretch occupies residues 533 to 713 (HQLHLTRQEK…QLPSMPQSDC (181 aa)).

Homodimer. Interacts with OFD1; the interaction is direct. Interacts with FAM161A. Interacts with RABEP2, ERC1 and CEP131. Expressed in thymus, prostate, testis, ovary, small intestine, colon, mucosa, colon and renal cancer tumors.

It localises to the cytoplasm. It is found in the cytoskeleton. Its subcellular location is the microtubule organizing center. The protein resides in the centrosome. The protein localises to the centriole. It localises to the cilium basal body. It is found in the cell junction. In terms of biological role, plays a role in the establishment of cell polarity and epithelial lumen formation. Also plays an essential role in ciliogenesis and subsequent Hedgehog signaling pathway that requires the presence of intact primary cilia for pathway activation. Mechanistically, interacts with and mediates RABEP2 centrosomal localization which is critical for ciliogenesis. The polypeptide is Serologically defined colon cancer antigen 8 (SDCCAG8) (Homo sapiens (Human)).